The following is a 247-amino-acid chain: Carboxy-S-adenosyl-L-methionine synthase (247 aa).

S-adenosyl-L-methionine-binding positions include Tyr-39, 64–66 (GCS), 89–90 (DN), 117–118 (DI), Asn-132, and Arg-199.

Belongs to the class I-like SAM-binding methyltransferase superfamily. Cx-SAM synthase family. As to quaternary structure, homodimer.

It catalyses the reaction prephenate + S-adenosyl-L-methionine = carboxy-S-adenosyl-L-methionine + 3-phenylpyruvate + H2O. In terms of biological role, catalyzes the conversion of S-adenosyl-L-methionine (SAM) to carboxy-S-adenosyl-L-methionine (Cx-SAM). The sequence is that of Carboxy-S-adenosyl-L-methionine synthase from Klebsiella pneumoniae (strain 342).